The sequence spans 461 residues: METLFNGTLSLGGRDQETTGFAWWAGNARLTNLSGKLLGAHVAHAGLIVFWAGAMNLFEVAHFVPEKPMYEQGLILLPHLATLGWGVGPGGEVIDTFPYFVSGVLHLVSSAVLGFGGIYHALIGPETLEESFPFFGYVWKDKSKMTTILGIHLILLGAGAFLLVLKSVYFGGVYDTWAPGGGDVRKITNLTLSPSILFGYLLKSPFGGEGWIISVDNLEDIIGGHVWLGSICIFGGIWHILTKPFAWARRAFVWSGEAYLSYSLGALSIFGFTACCFVWFNNTAYPSEFYGPTGPEASQAQAFTFLVRDQRLGASIGSAQGPTGLGKYLMRSPTGEIIFGGETMRFWDLRAPWLEPLRGPNGLDLNKLRRDIQPWQERRSAEYMTHAPLGSLNSVGGVATEINAVNYVSPRSWLATSHFVLGFFFFVGHLWHAGRARAAAAGFEKGIDRDTEPVLSMTPLN.

A propeptide spanning residues 1–2 is cleaved from the precursor; sequence ME. N-acetylthreonine is present on T3. At T3 the chain carries Phosphothreonine. A run of 5 helical transmembrane segments spans residues 57 to 81, 122 to 143, 166 to 188, 243 to 263, and 279 to 300; these read LFEV…PHLA, LIGP…KDKS, KSVY…RKIT, KPFA…LSYS, and WFNN…ASQA. Residue E355 coordinates [CaMn4O5] cluster. The helical transmembrane segment at 435 to 459 threads the bilayer; it reads RARAAAAGFEKGIDRDTEPVLSMTP.

The protein belongs to the PsbB/PsbC family. PsbC subfamily. PSII is composed of 1 copy each of membrane proteins PsbA, PsbB, PsbC, PsbD, PsbE, PsbF, PsbH, PsbI, PsbJ, PsbK, PsbL, PsbM, PsbT, PsbX, PsbY, PsbZ, Psb30/Ycf12, at least 3 peripheral proteins of the oxygen-evolving complex and a large number of cofactors. It forms dimeric complexes. Binds multiple chlorophylls and provides some of the ligands for the Ca-4Mn-5O cluster of the oxygen-evolving complex. It may also provide a ligand for a Cl- that is required for oxygen evolution. PSII binds additional chlorophylls, carotenoids and specific lipids. is required as a cofactor.

The protein localises to the plastid. It is found in the chloroplast thylakoid membrane. In terms of biological role, one of the components of the core complex of photosystem II (PSII). It binds chlorophyll and helps catalyze the primary light-induced photochemical processes of PSII. PSII is a light-driven water:plastoquinone oxidoreductase, using light energy to abstract electrons from H(2)O, generating O(2) and a proton gradient subsequently used for ATP formation. This is Photosystem II CP43 reaction center protein from Psilotum nudum (Whisk fern).